A 686-amino-acid chain; its full sequence is MAM domain-containing protein 2 (686 aa).

Residues 1-18 form the signal peptide; it reads MLLRGVLLALQALQLAGA. MAM domains lie at 24-169, 168-329, 340-498, and 507-666; these read GSCA…YCIE, IECD…HCQN, ASCN…SCSS, and GECT…PCGE. Asn134 and Asn329 each carry an N-linked (GlcNAc...) asparagine glycan. Disordered stretches follow at residues 521-543 and 665-686; these read EKRN…TGPK and GEME…EIEY. Asn524 carries an N-linked (GlcNAc...) asparagine glycan.

Post-translationally, O-glycosylated.

It is found in the secreted. The protein resides in the extracellular space. Its subcellular location is the extracellular matrix. The chain is MAM domain-containing protein 2 (MAMDC2) from Homo sapiens (Human).